The chain runs to 597 residues: Elongation factor 4 (597 aa).

The tr-type G domain maps to Lys2–Glu184. GTP-binding positions include Asp14 to Thr19 and Asn131 to Asp134.

It belongs to the TRAFAC class translation factor GTPase superfamily. Classic translation factor GTPase family. LepA subfamily.

Its subcellular location is the cell inner membrane. It carries out the reaction GTP + H2O = GDP + phosphate + H(+). In terms of biological role, required for accurate and efficient protein synthesis under certain stress conditions. May act as a fidelity factor of the translation reaction, by catalyzing a one-codon backward translocation of tRNAs on improperly translocated ribosomes. Back-translocation proceeds from a post-translocation (POST) complex to a pre-translocation (PRE) complex, thus giving elongation factor G a second chance to translocate the tRNAs correctly. Binds to ribosomes in a GTP-dependent manner. This Vibrio atlanticus (strain LGP32) (Vibrio splendidus (strain Mel32)) protein is Elongation factor 4.